The primary structure comprises 807 residues: MQFFGRLVNTLSSVTNLFSNPFRVKEVSLTDYVSSERVREEGQLILLQNVSNRTWDCVLVSPRNPQSGFRLFQLESEADALVNFQQFSSQLPPFYESSVQVLHVEVLQHLTDLIRNHPSWTVTHLAVELGIRECFHHSRIISCANSTENEEGCTPLHLACRKGDSEILVELVQYCHAQMDVTDNKGETAFHYAVQGDNPQVLQLLGKNASAGLNQVNNQGLTPLHLACKMGKQEMVRVLLLCNARCNIMGPGGFPIHTAMKFSQKGCAEMIISMDSNQIHSKDPRYGASPLHWAKNAEMARMLLKRGCDVDSTSSSGNTALHVAVMRNRFDCVMVLLTYGANAGARGEHGNTPLHLAMSKDNMEMVKALIVFGAEVDTPNDFGETPALIASKISKLITRKALLTLLKTVGADHHFPIIQGVSTEQGSAAATHPLFSLDRTQPPAISLNNLELQDLMPISRARKPAFILSSMRDEKRSHDHLLCLDGGGVKGLVIIQLLIAIEKASGVATKDLFDWVAGTSTGGILALAILHSKSMAYMRGVYFRMKDEVFRGSRPYESGPLEEFLKREFGEHTKMTDVKKPKVMLTGTLSDRQPAELHLFRNYDAPEAVREPRCNQNINLKPPTQPADQLVWRAARSSGAAPTYFRPNGRFLDGGLLANNPTLDAMTEIHEYNQDMIRKGQGNKVKKLSIVVSLGTGKSPQVPVTCVDVFRPSNPWELAKTVFGAKELGKMVVDCCTDPDGRAVDRARAWCEMVGIQYFRLNPQLGSDIMLDEVSDAVLVNALWETEVYIYEHREEFQKLVQLLLSP.

At S13 the chain carries Phosphoserine. ANK repeat units lie at residues 120–147, 151–181, 185–215, 219–248, 251–281, 286–312, 316–345, 349–378, and 382–403; these read WTVT…ANST, EGCT…QMDV, KGET…GLNQ, QGLT…RCNI, PGGF…QIHS, YGAS…DVDS, SGNT…NAGA, HGNT…EVDT, and FGET…KALL. The next 2 helical transmembrane spans lie at 481-501 and 512-532; these read LLCL…LIAI and LFDW…ILHS. The region spanning 482-666 is the PNPLA domain; sequence LCLDGGGVKG…LANNPTLDAM (185 aa). Residues 486-491 carry the GXGXXG motif; that stretch reads GGGVKG. The short motif at 518–522 is the GXSXG element; sequence GTSTG. S520 functions as the Nucleophile in the catalytic mechanism. D653 acts as the Proton acceptor in catalysis. Positions 653–655 match the DGA/G motif; it reads DGG. Residues 678-687 form a calmodulin-binding (1-9-14 motif) region; the sequence is RKGQGNKVKK. The segment at 749 to 760 is calmodulin-binding (IQ motif); that stretch reads AWCEMVGIQYFR.

Homodimer formed by catalytic domains tightly interacting through a large hydrophobic interface. The contact area involves 3 alpha helices, several loops and a part of the beta sheet from each monomer. Both active sites of the dimer are in close proximity adopting an open conformation that provide sufficient space for phospholipid access and favoring cooperativity in deacylation-reacylation reactions. Each monomer has 9 ankyrin repeats stacked side-by-side in an elongated structure oriented outwards from the catalytic core. Expressed in neurons of central and peripheral nervous system. Highly expressed in Purkinje cells in cerebellum and dorsal and ventral horn neurons in the spinal cord. Expressed in testis (at protein level). Expressed in skeletal muscle (at protein level).

It is found in the cytoplasm. The protein localises to the cell membrane. Its subcellular location is the mitochondrion. It localises to the cell projection. The protein resides in the pseudopodium. The catalysed reaction is a 1,2-diacyl-sn-glycero-3-phosphocholine + H2O = a 1-acyl-sn-glycero-3-phosphocholine + a fatty acid + H(+). The enzyme catalyses a 1-O-alkyl-2-acyl-sn-glycero-3-phosphocholine + H2O = a 1-O-alkyl-sn-glycero-3-phosphocholine + a fatty acid + H(+). It carries out the reaction 1,2-dihexadecanoyl-sn-glycero-3-phosphocholine + H2O = 1-hexadecanoyl-sn-glycero-3-phosphocholine + hexadecanoate + H(+). It catalyses the reaction 1-hexadecanoyl-2-(9Z-octadecenoyl)-sn-glycero-3-phosphocholine + H2O = 1-hexadecanoyl-sn-glycero-3-phosphocholine + (9Z)-octadecenoate + H(+). The catalysed reaction is 1-hexadecanoyl-2-(9Z,12Z-octadecadienoyl)-sn-glycero-3-phosphocholine + H2O = (9Z,12Z)-octadecadienoate + 1-hexadecanoyl-sn-glycero-3-phosphocholine + H(+). The enzyme catalyses 1-hexadecanoyl-2-(5Z,8Z,11Z,14Z-eicosatetraenoyl)-sn-glycero-3-phosphocholine + H2O = 1-hexadecanoyl-sn-glycero-3-phosphocholine + (5Z,8Z,11Z,14Z)-eicosatetraenoate + H(+). It carries out the reaction 1-octadecanoyl-2-(5Z,8Z,11Z,14Z-eicosatetraenoyl)-sn-glycero-3-phosphocholine + H2O = 1-octadecanoyl-sn-glycero-3-phosphocholine + (5Z,8Z,11Z,14Z)-eicosatetraenoate + H(+). It catalyses the reaction 1-hexadecanoyl-2-(5Z,8Z,11Z,14Z-eicosatetraenoyl)-sn-glycero-3-phosphoethanolamine + H2O = 1-hexadecanoyl-sn-glycero-3-phosphoethanolamine + (5Z,8Z,11Z,14Z)-eicosatetraenoate + H(+). The catalysed reaction is 1,2-dihexadecanoyl-sn-glycero-3-phosphate + H2O = 1-hexadecanoyl-sn-glycero-3-phosphate + hexadecanoate + H(+). The enzyme catalyses a 1-acyl-sn-glycero-3-phosphocholine + H2O = sn-glycerol 3-phosphocholine + a fatty acid + H(+). It carries out the reaction 1-hexadecanoyl-sn-glycero-3-phosphocholine + H2O = sn-glycerol 3-phosphocholine + hexadecanoate + H(+). It catalyses the reaction 1-(5Z,8Z,11Z,14Z-eicosatetraenoyl)-sn-glycero-3-phosphocholine + H2O = sn-glycerol 3-phosphocholine + (5Z,8Z,11Z,14Z)-eicosatetraenoate + H(+). The catalysed reaction is 2-(5Z,8Z,11Z,14Z)-eicosatetraenoyl-sn-glycero-3-phosphocholine + H2O = sn-glycerol 3-phosphocholine + (5Z,8Z,11Z,14Z)-eicosatetraenoate + H(+). The enzyme catalyses 1-O-hexadecyl-2-(5Z,8Z,11Z,14Z)-eicosatetraenoyl-sn-glycero-3-phosphocholine + H2O = 1-O-hexadecyl-sn-glycero-3-phosphocholine + (5Z,8Z,11Z,14Z)-eicosatetraenoate + H(+). It carries out the reaction 1-O-hexadecyl-2-acetyl-sn-glycero-3-phosphocholine + H2O = 1-O-hexadecyl-sn-glycero-3-phosphocholine + acetate + H(+). It catalyses the reaction hexadecanoyl-CoA + H2O = hexadecanoate + CoA + H(+). The catalysed reaction is 1',3'-bis[1,2-di-(9Z-octadecenoyl)-sn-glycero-3-phospho]-glycerol + H2O = 1'-[1,2-di-(9Z-octadecenoyl)-sn-glycero-3-phospho]-3'-[1-(9Z-octadecenoyl)-sn-glycero-3-phospho]-glycerol + (9Z)-octadecenoate + H(+). The enzyme catalyses 1'-[1,2-di-(9Z-octadecenoyl)-sn-glycero-3-phospho]-3'-[1-(9Z-octadecenoyl)-sn-glycero-3-phospho]-glycerol + H2O = 1',3'-bis-[1-(9Z-octadecenoyl)-sn-glycero-3-phospho]-glycerol + (9Z)-octadecenoate + H(+). It carries out the reaction 1',3'-bis-[1,2-di-(9Z,12Z-octadecadienoyl)-sn-glycero-3-phospho]-glycerol + H2O = 1'-[1,2-di-(9Z,12Z-octadecadienoyl)-sn-glycero-3-phospho]-3'-[1-(9Z,12Z-octadecadienoyl)-sn-glycero-3-phospho]-glycerol + (9Z,12Z)-octadecadienoate + H(+). It catalyses the reaction 1-octadecanoyl-2-(15-hydroxy-(5Z,8Z,11Z,13E)-eicosatetraenoyl)-sn-glycero-3-phosphoethanolamine + H2O = 1-octadecanoyl-sn-glycero-3-phosphoethanolamine + 15-hydroxy-(5Z,8Z,11Z,13E)-eicosatetraenoate + H(+). Its activity is regulated as follows. Inhibited by calcium-activated calmodulin. Activated by ATP. Inhibited by bromoenol lactone (BEL). Its function is as follows. Calcium-independent phospholipase involved in phospholipid remodeling with implications in cellular membrane homeostasis, mitochondrial integrity and signal transduction. Hydrolyzes the ester bond of the fatty acyl group attached at sn-1 or sn-2 position of phospholipids (phospholipase A1 and A2 activity respectively), producing lysophospholipids that are used in deacylation-reacylation cycles. Hydrolyzes both saturated and unsaturated long fatty acyl chains in various glycerophospholipid classes such as phosphatidylcholines, phosphatidylethanolamines and phosphatidates, with a preference for hydrolysis at sn-2 position. Can further hydrolyze lysophospholipids carrying saturated fatty acyl chains (lysophospholipase activity). Upon oxidative stress, contributes to remodeling of mitochondrial phospholipids in pancreatic beta cells, in a repair mechanism to reduce oxidized lipid content. Preferentially hydrolyzes oxidized polyunsaturated fatty acyl chains from cardiolipins, yielding monolysocardiolipins that can be reacylated with unoxidized fatty acyls to regenerate native cardiolipin species. Hydrolyzes oxidized glycerophosphoethanolamines present in pancreatic islets, releasing oxidized polyunsaturated fatty acids such as hydroxyeicosatetraenoates (HETEs). Has thioesterase activity toward fatty-acyl CoA releasing CoA-SH known to facilitate fatty acid transport and beta-oxidation in mitochondria particularly in skeletal muscle. Plays a role in regulation of membrane dynamics and homeostasis. Selectively hydrolyzes sn-2 arachidonoyl group in plasmalogen phospholipids, structural components of lipid rafts and myelin. Regulates F-actin polymerization at the pseudopods, which is required for both speed and directionality of MCP1/CCL2-induced monocyte chemotaxis. Targets membrane phospholipids to produce potent lipid signaling messengers. Generates lysophosphatidate (LPA, 1-acyl-glycerol-3-phosphate), which acts via G-protein receptors in various cell types. Has phospholipase A2 activity toward platelet-activating factor (PAF, 1-O-alkyl-2-acetyl-sn-glycero-3-phosphocholine), likely playing a role in inactivation of this potent pro-inflammatory signaling lipid. In response to glucose, amplifies calcium influx in pancreatic beta cells to promote INS secretion. The polypeptide is 85/88 kDa calcium-independent phospholipase A2 (Pla2g6) (Mus musculus (Mouse)).